Here is a 433-residue protein sequence, read N- to C-terminus: Signal recognition particle 54 kDa protein (433 aa).

Residues 100–107 (GLQGSGKT), 180–184 (DTAGR), and 238–241 (TKFD) each bind GTP.

The protein belongs to the GTP-binding SRP family. SRP54 subfamily. In terms of assembly, part of the signal recognition particle protein translocation system, which is composed of SRP and FtsY. Archaeal SRP consists of a 7S RNA molecule of 300 nucleotides and two protein subunits: SRP54 and SRP19.

It is found in the cytoplasm. It carries out the reaction GTP + H2O = GDP + phosphate + H(+). Involved in targeting and insertion of nascent membrane proteins into the cytoplasmic membrane. Binds to the hydrophobic signal sequence of the ribosome-nascent chain (RNC) as it emerges from the ribosomes. The SRP-RNC complex is then targeted to the cytoplasmic membrane where it interacts with the SRP receptor FtsY. This Archaeoglobus fulgidus (strain ATCC 49558 / DSM 4304 / JCM 9628 / NBRC 100126 / VC-16) protein is Signal recognition particle 54 kDa protein.